We begin with the raw amino-acid sequence, 67 residues long: Tachystatin-A2 (67 aa).

The first 23 residues, 1 to 23 (MKLQNTLILIGCLFLMGAMIGDA), serve as a signal peptide directing secretion. Disulfide bonds link cysteine 27–cysteine 47, cysteine 34–cysteine 52, and cysteine 46–cysteine 64.

As to expression, granular hemocytes, small secretory granules.

The protein resides in the secreted. Its function is as follows. Exhibits stronger antimicrobial activity against the Gram-positive bacteria (S.aureus (IC(50)=4.2 ug/ml)) and fungi (C.albicans (IC(50)=3.0 ug/ml) and P.pastoris (IC(50)=0.5 ug/ml)) than Gram-negative bacteria (E.coli (IC(50)=25 ug/ml)). Binds to chitin (8.4 uM are required to obtain 50% of binding). Does not cause hemolysis on sheep erythrocytes. Has no blocking activity on the P-type calcium channel. Has also been shown to weakly inhibit Kv1.2/KCNA2 voltage-gated potassium channels and TRPV1 receptors. The chain is Tachystatin-A2 from Tachypleus tridentatus (Japanese horseshoe crab).